A 256-amino-acid polypeptide reads, in one-letter code: Acetyl-coenzyme A carboxylase carboxyl transferase subunit alpha (256 aa).

Positions 1–236 constitute a CoA carboxyltransferase C-terminal domain; sequence MTDVARILKE…KLHLIDEITQ (236 aa).

It belongs to the AccA family. As to quaternary structure, acetyl-CoA carboxylase is a heterohexamer composed of biotin carboxyl carrier protein (AccB), biotin carboxylase (AccC) and two subunits each of ACCase subunit alpha (AccA) and ACCase subunit beta (AccD).

The protein localises to the cytoplasm. It catalyses the reaction N(6)-carboxybiotinyl-L-lysyl-[protein] + acetyl-CoA = N(6)-biotinyl-L-lysyl-[protein] + malonyl-CoA. The protein operates within lipid metabolism; malonyl-CoA biosynthesis; malonyl-CoA from acetyl-CoA: step 1/1. Functionally, component of the acetyl coenzyme A carboxylase (ACC) complex. First, biotin carboxylase catalyzes the carboxylation of biotin on its carrier protein (BCCP) and then the CO(2) group is transferred by the carboxyltransferase to acetyl-CoA to form malonyl-CoA. This Streptococcus equi subsp. zooepidemicus (strain H70) protein is Acetyl-coenzyme A carboxylase carboxyl transferase subunit alpha.